The following is a 492-amino-acid chain: Beta-Ala-His dipeptidase (492 aa).

Zn(2+) is bound at residue histidine 107. Aspartate 109 is a catalytic residue. Aspartate 140 contributes to the Zn(2+) binding site. Glutamate 174 serves as the catalytic Proton acceptor. Glutamate 175 lines the Zn(2+) pocket. Serine 194 is modified (phosphoserine). The Zn(2+) site is built by aspartate 203 and histidine 453.

This sequence belongs to the peptidase M20A family. As to quaternary structure, homodimer. Zn(2+) serves as cofactor. In terms of tissue distribution, detected exclusively in kidney.

Its subcellular location is the secreted. It catalyses the reaction Preferential hydrolysis of the beta-Ala-|-His dipeptide (carnosine), and also anserine, Xaa-|-His dipeptides and other dipeptides including homocarnosine.. The catalysed reaction is carnosine + H2O = beta-alanine + L-histidine. The enzyme catalyses anserine + H2O = N(pros)-methyl-L-histidine + beta-alanine. It carries out the reaction L-alanyl-L-histidine + H2O = L-histidine + L-alanine. It catalyses the reaction glycyl-L-histidine + H2O = L-histidine + glycine. The catalysed reaction is L-homocarnosine + H2O = 4-aminobutanoate + L-histidine. Its function is as follows. Catalyzes the peptide bond hydrolysis in Xaa-His dipeptides, displaying the highest activity toward carnosine (beta-alanyl-L-histidine) and anserine (beta-alanyl-3-methyl-histidine). The sequence is that of Beta-Ala-His dipeptidase (Cndp1) from Mus musculus (Mouse).